We begin with the raw amino-acid sequence, 350 residues long: MSQSSLSFQIEPVSKAQDQVIQQKIDLKTKPPGALGMLESLALQIARIQGPQQLQIVKPTMLVFAGDHGIAAEGVSIAPSEVTHQMVQNFAEGGAAINVFCRQLGLTLEVIDCGILTPVEGVEGIIDQRLGAGTGAIHLEPAMSLDCVDKGFAMARELIERHHQAGCNLVAFGEMGIGNTSSAAAIMAAIMQLEVADCVGRGTGINSETLARKLTLVELALLSHQSAMTGPKQVLACLGGFEIVQMTGAMLAAAERKMLVVVDGFIATAAALVAVTINANVRDYLIFAHRSEEQGHQRMLEHLQAKPLLSLGLRLGEGTGAALALPLIQAAANFYNQMASFSDAGIEAVV.

Catalysis depends on Glu-317, which acts as the Proton acceptor.

This sequence belongs to the CobT family.

It carries out the reaction 5,6-dimethylbenzimidazole + nicotinate beta-D-ribonucleotide = alpha-ribazole 5'-phosphate + nicotinate + H(+). It functions in the pathway nucleoside biosynthesis; alpha-ribazole biosynthesis; alpha-ribazole from 5,6-dimethylbenzimidazole: step 1/2. Its function is as follows. Catalyzes the synthesis of alpha-ribazole-5'-phosphate from nicotinate mononucleotide (NAMN) and 5,6-dimethylbenzimidazole (DMB). This chain is Nicotinate-nucleotide--dimethylbenzimidazole phosphoribosyltransferase, found in Shewanella oneidensis (strain ATCC 700550 / JCM 31522 / CIP 106686 / LMG 19005 / NCIMB 14063 / MR-1).